Reading from the N-terminus, the 121-residue chain is Large ribosomal subunit protein uL18 (121 aa).

This sequence belongs to the universal ribosomal protein uL18 family. As to quaternary structure, part of the 50S ribosomal subunit; part of the 5S rRNA/L5/L18/L25 subcomplex. Contacts the 5S and 23S rRNAs.

This is one of the proteins that bind and probably mediate the attachment of the 5S RNA into the large ribosomal subunit, where it forms part of the central protuberance. The chain is Large ribosomal subunit protein uL18 from Dehalococcoides mccartyi (strain ATCC BAA-2266 / KCTC 15142 / 195) (Dehalococcoides ethenogenes (strain 195)).